Consider the following 235-residue polypeptide: Pro-opiomelanocortin (235 aa).

Positions 1 to 26 are cleaved as a signal peptide; that stretch reads MPRFCNSRSGALLLALLLQTSIDVWS. A Phenylalanine amide modification is found at Phe87. The tract at residues 88 to 128 is disordered; it reads GPRNSSSAGGSAQRRAEEETAGGDGRPEPSPREGKRSYSME. The segment covering 112–128 has biased composition (basic and acidic residues); the sequence is GRPEPSPREGKRSYSME. N-acetylserine; in Corticotropin is present on Ser124. Val136 is modified (valine amide). A glycan (N-linked (GlcNAc...) asparagine) is linked at Asn152. Ser154 carries the phosphoserine modification. The tract at residues 169 to 209 is disordered; it reads EQPDGLEQVLEPDTEKADGPYRVEHFRWGNPPKDKRYGGFM. Positions 181–205 are enriched in basic and acidic residues; it reads DTEKADGPYRVEHFRWGNPPKDKRY.

The protein belongs to the POMC family. Specific enzymatic cleavages at paired basic residues yield the different active peptides. In terms of tissue distribution, ACTH and MSH are produced by the pituitary gland.

The protein resides in the secreted. Functionally, stimulates the adrenal glands to release cortisol. In terms of biological role, anorexigenic peptide. Increases the pigmentation of skin by increasing melanin production in melanocytes. Increases the pigmentation of skin by increasing melanin production in melanocytes. Its function is as follows. Endogenous orexigenic opiate. Functionally, endogenous opiate. This is Pro-opiomelanocortin (Pomc) from Rattus norvegicus (Rat).